A 330-amino-acid polypeptide reads, in one-letter code: Probable UDP-3-O-acylglucosamine N-acyltransferase 1, mitochondrial (330 aa).

The N-terminal 52 residues, 1–52, are a transit peptide targeting the mitochondrion; that stretch reads MANSLRTLFSVSTHGVFLNKRSSYRVRKVFVGMPLRICSEIPRFVSVSCIRS. 160–162 contacts UDP-N-acetyl-alpha-D-glucosamine; the sequence is FGF. Hexadecanoate-binding residues include Asp-210 and Gln-214. The active-site Proton acceptor is the His-217. Residues Asn-218, Ser-236, and His-254 each coordinate UDP-N-acetyl-alpha-D-glucosamine.

The protein belongs to the transferase hexapeptide repeat family. LpxD subfamily. In terms of assembly, homotrimer.

It is found in the mitochondrion. It carries out the reaction a UDP-3-O-[(3R)-3-hydroxyacyl]-alpha-D-glucosamine + a (3R)-hydroxyacyl-[ACP] = a UDP-2-N,3-O-bis[(3R)-3-hydroxyacyl]-alpha-D-glucosamine + holo-[ACP] + H(+). It participates in glycolipid biosynthesis; lipid IV(A) biosynthesis; lipid IV(A) from (3R)-3-hydroxytetradecanoyl-[acyl-carrier-protein] and UDP-N-acetyl-alpha-D-glucosamine: step 3/6. Its function is as follows. Involved in the biosynthesis of lipid A, a phosphorylated glycolipid that in bacteria anchors the lipopolysaccharide to the outer membrane of the cell. Lipid A-like molecules in plants may serve as structural components of the outer membranes of mitochondria and/or chloroplasts, or may be involved in signal transduction or plant defense responses. The chain is Probable UDP-3-O-acylglucosamine N-acyltransferase 1, mitochondrial (LPXD1) from Arabidopsis thaliana (Mouse-ear cress).